The sequence spans 208 residues: Large ribosomal subunit protein uL3 (208 aa).

Residues 123–146 form a disordered region; it reads RHGQSRGPMAHGSRYHRRPGSMGP.

The protein belongs to the universal ribosomal protein uL3 family. As to quaternary structure, part of the 50S ribosomal subunit. Forms a cluster with proteins L14 and L19.

In terms of biological role, one of the primary rRNA binding proteins, it binds directly near the 3'-end of the 23S rRNA, where it nucleates assembly of the 50S subunit. This is Large ribosomal subunit protein uL3 from Streptococcus thermophilus (strain CNRZ 1066).